The following is a 258-amino-acid chain: Type III pantothenate kinase (258 aa).

ATP is bound at residue Asp12–Ala19. Substrate-binding positions include Tyr94 and Gly109–Val112. Asp111 (proton acceptor) is an active-site residue. A K(+)-binding site is contributed by Asp132. Residue Thr135 participates in ATP binding. A substrate-binding site is contributed by Thr187.

It belongs to the type III pantothenate kinase family. As to quaternary structure, homodimer. Requires NH4(+) as cofactor. The cofactor is K(+).

Its subcellular location is the cytoplasm. The enzyme catalyses (R)-pantothenate + ATP = (R)-4'-phosphopantothenate + ADP + H(+). It participates in cofactor biosynthesis; coenzyme A biosynthesis; CoA from (R)-pantothenate: step 1/5. Catalyzes the phosphorylation of pantothenate (Pan), the first step in CoA biosynthesis. The polypeptide is Type III pantothenate kinase (Borreliella afzelii (strain PKo) (Borrelia afzelii)).